The following is a 671-amino-acid chain: Carbohydrate acetyl esterase/feruloyl esterase (671 aa).

The N-terminal stretch at 1-24 is a signal peptide; the sequence is MYQSTLKTILLASALLILPASMSA. The carbohydrate acetyl esterase stretch occupies residues 1–296; that stretch reads MYQSTLKTIL…YGEAVARHLG (296 aa). Residues Ser55, Asp271, and His274 each act as for acetyl esterase activity in the active site. Residues 297-671 form a feruloyl esterase region; sequence YEPKRPYIEM…NEFIPHLFKK (375 aa).

It in the N-terminal section; belongs to the carbohydrate esterase 6 family.

The enzyme catalyses feruloyl-polysaccharide + H2O = ferulate + polysaccharide.. The protein operates within glycan degradation; xylan degradation. In terms of biological role, involved in degradation of plant cell wall polysaccharides. Bifunctional esterase that possesses both acetyl esterase and ferulic acid esterase activities. Has deacetylase activity towards acetylated xylo-oligosaccharides smaller than xylo-heptaose, as well as from glucose-pentaacetate. Is also able to release ferulic acid from methylferulate, and from the more natural substrates wheat bran, corn fiber, and XOS(FA,Ac), a corn fiber-derived substrate enriched in O-acetyl and ferulic acid esters. This Xylanibacter ruminicola (strain ATCC 19189 / DSM 19721 / CIP 105475 / JCM 8958 / 23) (Prevotella ruminicola) protein is Carbohydrate acetyl esterase/feruloyl esterase.